Consider the following 309-residue polypeptide: Cytochrome c biogenesis protein CcsA (309 aa).

Helical transmembrane passes span 18–38 (LGLL…GAFF), 43–63 (FFIV…QLLF), 67–87 (ISGH…TWGI), 102–122 (IIPS…CFVL), 148–168 (VMLS…VLFI), 216–236 (SILI…VWAN), 250–267 (TWAF…HMRI), and 279–299 (LATT…FLGI).

This sequence belongs to the CcmF/CycK/Ccl1/NrfE/CcsA family. As to quaternary structure, may interact with ccs1.

It localises to the cellular thylakoid membrane. Functionally, required during biogenesis of c-type cytochromes (cytochrome c6 and cytochrome f) at the step of heme attachment. The protein is Cytochrome c biogenesis protein CcsA of Prochlorococcus marinus (strain MIT 9215).